The sequence spans 161 residues: S-ribosylhomocysteine lyase (161 aa).

Positions 57, 61, and 124 each coordinate Fe cation.

Belongs to the LuxS family. As to quaternary structure, homodimer. It depends on Fe cation as a cofactor.

The catalysed reaction is S-(5-deoxy-D-ribos-5-yl)-L-homocysteine = (S)-4,5-dihydroxypentane-2,3-dione + L-homocysteine. Involved in the synthesis of autoinducer 2 (AI-2) which is secreted by bacteria and is used to communicate both the cell density and the metabolic potential of the environment. The regulation of gene expression in response to changes in cell density is called quorum sensing. Catalyzes the transformation of S-ribosylhomocysteine (RHC) to homocysteine (HC) and 4,5-dihydroxy-2,3-pentadione (DPD). The sequence is that of S-ribosylhomocysteine lyase from Macrococcus caseolyticus (strain JCSC5402) (Macrococcoides caseolyticum).